Here is a 1336-residue protein sequence, read N- to C-terminus: Aldehyde oxidase 4 (1336 aa).

One can recognise a 2Fe-2S ferredoxin-type domain in the interval 8-95 (DELIFFVNGK…GAAITTVEGV (88 aa)). [2Fe-2S] cluster is bound by residues Cys47, Cys52, Cys55, and Cys77. Gln116 is a Mo-molybdopterin binding site. 4 residues coordinate [2Fe-2S] cluster: Cys117, Cys120, Cys152, and Cys154. Cys154 is a Mo-molybdopterin binding site. The region spanning 237 to 423 (FQGKRTTWII…LSIFIPYTAQ (187 aa)) is the FAD-binding PCMH-type domain. FAD is bound by residues 265–272 (LVMGNTTV), Ala346, Thr355, His359, Asp368, and Ile413. Mo-molybdopterin-binding positions include 804–805 (AF), Leu1045, 1086–1089 (GSMG), Gln1201, and Leu1265. Residue Glu1267 is the Proton acceptor; for azaheterocycle hydroxylase activity of the active site.

This sequence belongs to the xanthine dehydrogenase family. Homodimer. Requires [2Fe-2S] cluster as cofactor. It depends on FAD as a cofactor. The cofactor is Mo-molybdopterin. In terms of tissue distribution, highly expressed in Harderian glands and sebaceous glands with detectable levels in the epidermis and other keratinized epithelia (at protein level). Detected in testis. The expression is 3 times greater in females than in males.

Its subcellular location is the cytoplasm. It carries out the reaction an aldehyde + O2 + H2O = a carboxylate + H2O2 + H(+). The enzyme catalyses retinal + O2 + H2O = retinoate + H2O2 + H(+). It catalyses the reaction all-trans-retinal + O2 + H2O = all-trans-retinoate + H2O2 + H(+). In terms of biological role, aldehyde oxidase able to catalyze the oxidation of retinaldehyde into retinoate. Is responsible for the major all-trans-retinaldehyde-metabolizing activity in the Harderian gland, and contributes a significant amount of the same activity in the skin. Is devoid of pyridoxal-oxidizing activity, in contrast to the other aldehyde oxidases. Acts as a negative modulator of the epidermal trophism. May be able to oxidize a wide variety of aldehydes into their corresponding carboxylates and to hydroxylate azaheterocycles. The chain is Aldehyde oxidase 4 (Aox4) from Mus musculus (Mouse).